The primary structure comprises 154 residues: Putative nickel-responsive regulator (154 aa).

Positions 95, 106, 108, and 114 each coordinate Ni(2+).

The protein belongs to the transcriptional regulatory CopG/NikR family. The cofactor is Ni(2+).

Its function is as follows. Transcriptional regulator. The sequence is that of Putative nickel-responsive regulator from Caldanaerobacter subterraneus subsp. tengcongensis (strain DSM 15242 / JCM 11007 / NBRC 100824 / MB4) (Thermoanaerobacter tengcongensis).